A 114-amino-acid chain; its full sequence is Phosphorelay protein LuxU (114 aa).

The region spanning 19-114 (GSDNVPVLLD…TRDAYRSWTN (96 aa)) is the HPt domain. His-58 bears the Phosphohistidine mark.

As to quaternary structure, monomer.

Phosphorelay protein which receives sensory signals from LuxN and LuxP and transmits them to LuxO, at low cell density. LuxN and LuxP transfer a phosphoryl group to LuxU on His-58 and this phosphoryl group is further transferred to LuxO. At high cell density, as LuxU could function to establish an equilibrium between the aspartyl-phosphate of LuxN and the aspartyl-phosphate of LuxO, LuxU transfers phosphate from LuxO to LuxN (and probably LuxP) and finally phosphate is drained from the system. This is Phosphorelay protein LuxU (luxU) from Vibrio harveyi (Beneckea harveyi).